A 349-amino-acid chain; its full sequence is Pseudouridylate synthase TRUB1 (349 aa).

The residue at position 2 (Ala2) is an N-acetylalanine. Ser11 is modified (phosphoserine). The Nucleophile role is filled by Asp121.

This sequence belongs to the pseudouridine synthase TruB family. Highly expressed in heart, skeletal muscle and liver. Expressed at lower levels in lung, small intestine, kidney and spleen.

Its subcellular location is the nucleus. The protein localises to the cytoplasm. The protein resides in the cytosol. It carries out the reaction a uridine in mRNA = a pseudouridine in mRNA. It catalyses the reaction a uridine in tRNA = a pseudouridine in tRNA. The catalysed reaction is uridine(55) in tRNA = pseudouridine(55) in tRNA. Pseudouridine synthase that catalyzes pseudouridylation of mRNAs and tRNAs. Mediates pseudouridylation of mRNAs with the consensus sequence 5'-GUUCNANNC-3', harboring a stem-loop structure. Constitutes the major pseudouridine synthase acting on mRNAs. Also catalyzes pseudouridylation of some tRNAs, including synthesis of pseudouridine(55) from uracil-55, in the psi GC loop of a subset of tRNAs. Promotes the processing of pri-let-7 microRNAs (pri-miRNAs) independently of its RNA pseudouridylate synthase activity. Acts by binding to the stem-loop structure on pri-let-7, preventing LIN28-binding (LIN28A and/or LIN28B), thereby enhancing the interaction between pri-let-7 and the microprocessor DGCR8, which mediates miRNA maturation. The chain is Pseudouridylate synthase TRUB1 from Homo sapiens (Human).